The chain runs to 571 residues: Urease subunit alpha (571 aa).

The Urease domain occupies 133–571 (GGIDTHVHFI…LPLTQRYFLF (439 aa)). Ni(2+) contacts are provided by H138, H140, and K221. The residue at position 221 (K221) is an N6-carboxylysine. Position 223 (H223) interacts with substrate. H250 and H276 together coordinate Ni(2+). Residue H324 is the Proton donor of the active site. D364 serves as a coordination point for Ni(2+).

It belongs to the metallo-dependent hydrolases superfamily. Urease alpha subunit family. As to quaternary structure, heterotrimer of UreA (gamma), UreB (beta) and UreC (alpha) subunits. Three heterotrimers associate to form the active enzyme. The cofactor is Ni cation. Carboxylation allows a single lysine to coordinate two nickel ions.

The protein resides in the cytoplasm. It carries out the reaction urea + 2 H2O + H(+) = hydrogencarbonate + 2 NH4(+). The protein operates within nitrogen metabolism; urea degradation; CO(2) and NH(3) from urea (urease route): step 1/1. In Staphylococcus aureus (strain MRSA252), this protein is Urease subunit alpha.